We begin with the raw amino-acid sequence, 423 residues long: UPF0229 protein PST_0721 (423 aa).

Residues 84 to 109 are disordered; sequence AGERIPRPQGGGGGQGAGQASNSGEG.

This sequence belongs to the UPF0229 family.

The polypeptide is UPF0229 protein PST_0721 (Stutzerimonas stutzeri (strain A1501) (Pseudomonas stutzeri)).